A 425-amino-acid polypeptide reads, in one-letter code: Dihydroorotase (425 aa).

The Zn(2+) site is built by His-61 and His-63. Residues 63–65 (HLR) and Asn-95 each bind substrate. Residues Asp-153, His-180, and His-233 each coordinate Zn(2+). A substrate-binding site is contributed by Asn-279. Residue Asp-306 participates in Zn(2+) binding. Residue Asp-306 is part of the active site. His-310 is a binding site for substrate.

Belongs to the metallo-dependent hydrolases superfamily. DHOase family. Class I DHOase subfamily. Requires Zn(2+) as cofactor.

It catalyses the reaction (S)-dihydroorotate + H2O = N-carbamoyl-L-aspartate + H(+). It functions in the pathway pyrimidine metabolism; UMP biosynthesis via de novo pathway; (S)-dihydroorotate from bicarbonate: step 3/3. In terms of biological role, catalyzes the reversible cyclization of carbamoyl aspartate to dihydroorotate. The sequence is that of Dihydroorotase from Geotalea daltonii (strain DSM 22248 / JCM 15807 / FRC-32) (Geobacter daltonii).